The following is a 100-amino-acid chain: Large ribosomal subunit protein bL21 (100 aa).

Belongs to the bacterial ribosomal protein bL21 family. As to quaternary structure, part of the 50S ribosomal subunit. Contacts protein L20.

This protein binds to 23S rRNA in the presence of protein L20. This chain is Large ribosomal subunit protein bL21, found in Wolbachia sp. subsp. Drosophila simulans (strain wRi).